The following is a 431-amino-acid chain: Serine hydroxymethyltransferase 1 (431 aa).

Residues Leu127 and 131–133 (GHL) contribute to the (6S)-5,6,7,8-tetrahydrofolate site. The residue at position 236 (Lys236) is an N6-(pyridoxal phosphate)lysine. Residue Glu252 participates in (6S)-5,6,7,8-tetrahydrofolate binding.

The protein belongs to the SHMT family. As to quaternary structure, homodimer. It depends on pyridoxal 5'-phosphate as a cofactor.

Its subcellular location is the cytoplasm. It catalyses the reaction (6R)-5,10-methylene-5,6,7,8-tetrahydrofolate + glycine + H2O = (6S)-5,6,7,8-tetrahydrofolate + L-serine. Its pathway is one-carbon metabolism; tetrahydrofolate interconversion. It participates in amino-acid biosynthesis; glycine biosynthesis; glycine from L-serine: step 1/1. Catalyzes the reversible interconversion of serine and glycine with tetrahydrofolate (THF) serving as the one-carbon carrier. This reaction serves as the major source of one-carbon groups required for the biosynthesis of purines, thymidylate, methionine, and other important biomolecules. Also exhibits THF-independent aldolase activity toward beta-hydroxyamino acids, producing glycine and aldehydes, via a retro-aldol mechanism. In Rhizobium meliloti (strain 1021) (Ensifer meliloti), this protein is Serine hydroxymethyltransferase 1.